Reading from the N-terminus, the 414-residue chain is Protein RecA (414 aa).

78–85 (GPESSGKT) is an ATP binding site. The span at 361-384 (QEKAVEALKKEEGSKEDALTGNKD) shows a compositional bias: basic and acidic residues. A disordered region spans residues 361-414 (QEKAVEALKKEEGSKEDALTGNKDETDDSAQKNSAASKAKRAEVVGLPADDSLF).

It belongs to the RecA family.

It localises to the cytoplasm. Functionally, can catalyze the hydrolysis of ATP in the presence of single-stranded DNA, the ATP-dependent uptake of single-stranded DNA by duplex DNA, and the ATP-dependent hybridization of homologous single-stranded DNAs. It interacts with LexA causing its activation and leading to its autocatalytic cleavage. In Treponema denticola (strain ATCC 35405 / DSM 14222 / CIP 103919 / JCM 8153 / KCTC 15104), this protein is Protein RecA.